The chain runs to 153 residues: UPF0260 protein YcgN (153 aa).

It belongs to the UPF0260 family.

This Salmonella paratyphi B (strain ATCC BAA-1250 / SPB7) protein is UPF0260 protein YcgN.